The chain runs to 99 residues: Plastocyanin (99 aa).

One can recognise a Plastocyanin-like domain in the interval 1-99 (VEVLMGGSGG…IGMSGIVTVN (99 aa)). Positions 37, 84, 87, and 92 each coordinate Cu cation.

It belongs to the plastocyanin family. Cu(2+) serves as cofactor.

The protein resides in the plastid. It is found in the chloroplast thylakoid membrane. Functionally, participates in electron transfer between P700 and the cytochrome b6-f complex in photosystem I. This is Plastocyanin (PETE) from Ginkgo biloba (Ginkgo).